Here is a 274-residue protein sequence, read N- to C-terminus: 2-dehydro-3-deoxyphosphooctonate aldolase (274 aa).

This sequence belongs to the KdsA family.

The protein resides in the cytoplasm. The catalysed reaction is D-arabinose 5-phosphate + phosphoenolpyruvate + H2O = 3-deoxy-alpha-D-manno-2-octulosonate-8-phosphate + phosphate. Its pathway is carbohydrate biosynthesis; 3-deoxy-D-manno-octulosonate biosynthesis; 3-deoxy-D-manno-octulosonate from D-ribulose 5-phosphate: step 2/3. It participates in bacterial outer membrane biogenesis; lipopolysaccharide biosynthesis. The protein is 2-dehydro-3-deoxyphosphooctonate aldolase of Rickettsia felis (strain ATCC VR-1525 / URRWXCal2) (Rickettsia azadi).